We begin with the raw amino-acid sequence, 389 residues long: Mannitol-1-phosphate 5-dehydrogenase (389 aa).

Ala5 to Gly16 serves as a coordination point for NAD(+). Lys214 is a catalytic residue.

The protein belongs to the mannitol dehydrogenase family. As to quaternary structure, monomer.

It catalyses the reaction D-mannitol 1-phosphate + NAD(+) = beta-D-fructose 6-phosphate + NADH + H(+). Its function is as follows. Catalyzes the NAD(H)-dependent interconversion of D-fructose 6-phosphate and D-mannitol 1-phosphate in the mannitol metabolic pathway. The polypeptide is Mannitol-1-phosphate 5-dehydrogenase (Talaromyces marneffei (strain ATCC 18224 / CBS 334.59 / QM 7333) (Penicillium marneffei)).